We begin with the raw amino-acid sequence, 906 residues long: MAKIYVDSKIYNVNESDNLLQACLSVGINIPYFCWHPLLGSLGACRQCAVTQYDNFQDRKGRLIMSCMTPVTDGAIISIKSTESEVFRSAIVELLLTNHPHDCPVCEEGGHCHLQDMTVMVKHSMRNYRFKKRTHKNQYLGPFIKHEMNRCIACYRCVRYYNEYADGVDFGVYGSNNNVYFGRIEDGVLESEHSGNLIELCPTGVFTDKTHSKKYNRKWDMQYAPGICHNCSVGCNISIGERYGEIRRIENRYHENINHYLICDLGRFGYSHTNLNTRPKKPTYVNKYNDLNVLNFNEAIKIGVDFFKRYKRVIGVGSARSSIENNFALQELVGKENFSNGMSNKEKECIKSILEFLKNNYIYIPSLKEIESYDVILVLGEDLTQTSSRVALAVRQAVKKKVQDIKNLYGIPKWNTSSNIHISEKFKNSLYIMHTHESKLDDISEWSYFASIDKQVNLASSIAYEIDKSSPKVSNLDSELKEKVLLISDRLISSKKTLIISGSHSFSDSIIKASINIAKAIKFRAPDHHVGVTLLTSSVNSLGAELLGGMSIESALDDLKKEKADAVIFMEYDLYRSVSEYDCEYFFKNKDNIITLDHQYTQTFKKSMLSLPSTNFTESSGTVINFEGRAQRFFQVYDPNFYDKSNCLCDSWKWLHTIKSKINNTEICWFNLDDVINSYAEKYSIFKQIKTNELNSNLRIHGQKISRSPIRSSGRTSLRSNIDVHEPCQPKDINTMFAFSMEGYNQPNSSVSNIPFAWFPGWNSPQAWNKFQVEVGRNLISGDSGIHIFKKYEKKTDVYSNIVLKNSIKEKYWNIIPYYHLFGNEELTQYSSIIQENTPLEYALIGLSDAIKMGLKKDSIVEFNCLKKDYCLPVQVSKYLTEKQIGLPIGRKGFPLALVGEKIEFL.

The 82-residue stretch at Ala-2 to Glu-83 folds into the 2Fe-2S ferredoxin-type domain. [2Fe-2S] cluster-binding residues include Cys-34, Cys-45, Cys-48, and Cys-67. Residues Glu-83–Lys-122 enclose the 4Fe-4S His(Cys)3-ligated-type domain. [4Fe-4S] cluster-binding residues include His-99, Cys-103, Cys-106, Cys-112, Cys-151, Cys-154, Cys-157, Cys-201, Cys-228, Cys-231, Cys-235, and Cys-263. The region spanning Met-221 to Thr-277 is the 4Fe-4S Mo/W bis-MGD-type domain.

The protein belongs to the complex I 75 kDa subunit family. In terms of assembly, composed of 13 different subunits. Subunits NuoCD, E, F, and G constitute the peripheral sector of the complex. [2Fe-2S] cluster serves as cofactor. Requires [4Fe-4S] cluster as cofactor.

It carries out the reaction a quinone + NADH + 5 H(+)(in) = a quinol + NAD(+) + 4 H(+)(out). Its function is as follows. NDH-1 shuttles electrons from NADH, via FMN and iron-sulfur (Fe-S) centers, to quinones in the respiratory chain. Couples the redox reaction to proton translocation (for every two electrons transferred, four hydrogen ions are translocated across the cytoplasmic membrane), and thus conserves the redox energy in a proton gradient. The protein is NADH-quinone oxidoreductase subunit G (nuoG) of Buchnera aphidicola subsp. Acyrthosiphon pisum (strain APS) (Acyrthosiphon pisum symbiotic bacterium).